Here is a 629-residue protein sequence, read N- to C-terminus: tRNA uridine 5-carboxymethylaminomethyl modification enzyme MnmG (629 aa).

13–18 (GGGHAG) serves as a coordination point for FAD. 273-287 (GPRYCPSIEDKVMRF) is an NAD(+) binding site.

It belongs to the MnmG family. In terms of assembly, homodimer. Heterotetramer of two MnmE and two MnmG subunits. FAD is required as a cofactor.

The protein resides in the cytoplasm. In terms of biological role, NAD-binding protein involved in the addition of a carboxymethylaminomethyl (cmnm) group at the wobble position (U34) of certain tRNAs, forming tRNA-cmnm(5)s(2)U34. The polypeptide is tRNA uridine 5-carboxymethylaminomethyl modification enzyme MnmG (Photorhabdus laumondii subsp. laumondii (strain DSM 15139 / CIP 105565 / TT01) (Photorhabdus luminescens subsp. laumondii)).